A 236-amino-acid chain; its full sequence is E3 ubiquitin-protein ligase ATL41 (236 aa).

Residues 31-51 (IMLAAVASLSGVILIVFALHL) traverse the membrane as a helical segment. An RING-type; atypical zinc finger spans residues 108 to 150 (CAVCLSVLKEQDKARELPNCKHIFHVDCVDTWLTTCSTCPVCR).

This sequence belongs to the RING-type zinc finger family. ATL subfamily.

It is found in the membrane. The catalysed reaction is S-ubiquitinyl-[E2 ubiquitin-conjugating enzyme]-L-cysteine + [acceptor protein]-L-lysine = [E2 ubiquitin-conjugating enzyme]-L-cysteine + N(6)-ubiquitinyl-[acceptor protein]-L-lysine.. It participates in protein modification; protein ubiquitination. E3 ubiquitin-protein ligase able to catalyze polyubiquitination with ubiquitin-conjugating enzyme E2 UBC8, UBC10, UBC11, UBC28, UBC29, UBC30, UBC35 and UBC36 in vitro. The chain is E3 ubiquitin-protein ligase ATL41 (ATL41) from Arabidopsis thaliana (Mouse-ear cress).